We begin with the raw amino-acid sequence, 232 residues long: Zinc-finger homeodomain protein 5 (232 aa).

Residues 1–11 are compositionally biased toward acidic residues; it reads MELSEHEEDAG. The interval 1–25 is disordered; that stretch reads MELSEHEEDAGDVGGGCSSPPTPPH. The ZF-HD dimerization-type; degenerate zinc-finger motif lies at 40 to 86; sequence YHECLRNHAAASGGHVVDGCGEFMPASTEEPLACAACGCHRSFHRRD. The disordered stretch occupies residues 126 to 170; that stretch reads GLPFPGYGTPSGGTGTTTASSSDERLRPSPVQPRRRSRTTFTREQ. A DNA-binding region (homeobox) is located at residues 159–222; that stretch reads RRRSRTTFTR…NNKHSFKQKQ (64 aa).

Homo- and heterodimer with other ZFHD proteins.

It is found in the nucleus. In terms of biological role, putative transcription factor. The sequence is that of Zinc-finger homeodomain protein 5 (ZHD5) from Oryza sativa subsp. indica (Rice).